The sequence spans 614 residues: Fem-3 mRNA-binding factor 1 (614 aa).

Residues 1–24 (MDQSKMRYTNQFRKTPQKPTSTEV) show a composition bias toward polar residues. The disordered stretch occupies residues 1-34 (MDQSKMRYTNQFRKTPQKPTSTEVGNHHTPAHSP). The PUM-HD domain occupies 160 to 564 (TRSNNVLPTW…KMIETLAHLR (405 aa)). Pumilio repeat units follow at residues 185–223 (EVLDSGDLMKFAVDKTGCQFLEKAVKGSLTSYQKFQLFE), 224–263 (QVIGRKDDFLKLSTNIFGNYFVQEIIGMSLTTYDDDNIKR), 269–305 (NFISSQMTDMCLDKFACRVIQSSLQNMDLSLACKLVQ), 306–342 (ALPRDARLIAICVDQNANHVIQKVVAVIPLKNWEFIV), 343–382 (DFVATPEHLRQICFDKYGCRVVQTIIEKLTADSINVDLTS), 398–434 (SVTNRCQELATNEYANYIIQHIVSNDDLAVYRECIIE), 436–471 (CLMRNLLSLSQEKFASHVVEKAFLHAPMELLAEMMD), and 483–519 (TGKDALDIMMFHQFGNYVVQCMLTICCDAVSGRRQTK). The binding to gld-3 isoform A stretch occupies residues 283–614 (FACRVIQSSL…NLRLMRTFSP (332 aa)).

As to quaternary structure, interacts (via C-terminus) with gld-3 isoform A in an RNA-independent manner. As to expression, expressed specifically in the germline (at protein level).

Its subcellular location is the cytoplasm. Its function is as follows. RNA-binding protein that binds to the consensus sequence 5'-UGUGCCAUA-3' in mRNA 3'-UTRs. Involved in the control of stem cells and sex determination in the C.elegans hermaphrodite germline. May also play a role in the hermaphrodite germline proliferation and oogenesis. Binds specifically to the regulatory region of fem-3 3'-UTR and mediates the sperm/oocyte switch. Negatively regulates gld-3 expression, possibly by directly binding to two sites within the 3'-UTR of gld-3 isoform b. In association with the cye-1/cdk-2 complex, negatively regulates gld-1 expression in the distal germline cells of the mitotic zone. By binding to the 3'-UTR, represses phosphatase lip-1 expression in the distal part of the germline mitotic zone. Suppresses germline tumor formation by preventing the dedifferentiation of secondary spermatocytes. This Caenorhabditis elegans protein is Fem-3 mRNA-binding factor 1 (fbf-1).